Here is a 357-residue protein sequence, read N- to C-terminus: MNWDDTTDAEAAAERLVGAAADGEDQAVEAALRPKDLGEFIGQEKVREQLDLVLRAARARGATADHVLLSGAPGLGKTTLSMIIAAEMEAPIRITSGPAIQHAGDLAAILSSLQEGEVLFLDEIHRMSRPAEEMLYMAMEDFRVDVIVGKGPGATAIPLELPPFTLVGATTRAGLLPPPLRDRFGFTAHMEFYGPAELERVIHRSAGLLDVEIDPTGAAEIAGRSRGTPRIANRLLRRVRDYAQVKADGLITQEIAAAALAVYEVDARGLDRLDRGVLEALLKLFGGGPVGLSTLAVAVGEERETVEEVAEPFLVREGLLARTPRGRVATPAAWAHLGLTPPRPQSSGNGQPDLFGA.

The segment at 3 to 193 is large ATPase domain (RuvB-L); sequence WDDTTDAEAA…FGFTAHMEFY (191 aa). ATP contacts are provided by residues leucine 32, arginine 33, glycine 74, lysine 77, threonine 78, threonine 79, 140-142, arginine 183, tyrosine 193, and arginine 230; that span reads EDF. Threonine 78 contacts Mg(2+). The small ATPAse domain (RuvB-S) stretch occupies residues 194–264; that stretch reads GPAELERVIH…IAAAALAVYE (71 aa). Residues 267–357 form a head domain (RuvB-H) region; the sequence is ARGLDRLDRG…GNGQPDLFGA (91 aa). Residues arginine 303, arginine 322, and arginine 327 each coordinate DNA. The segment at 337–357 is disordered; it reads LGLTPPRPQSSGNGQPDLFGA.

It belongs to the RuvB family. As to quaternary structure, homohexamer. Forms an RuvA(8)-RuvB(12)-Holliday junction (HJ) complex. HJ DNA is sandwiched between 2 RuvA tetramers; dsDNA enters through RuvA and exits via RuvB. An RuvB hexamer assembles on each DNA strand where it exits the tetramer. Each RuvB hexamer is contacted by two RuvA subunits (via domain III) on 2 adjacent RuvB subunits; this complex drives branch migration. In the full resolvosome a probable DNA-RuvA(4)-RuvB(12)-RuvC(2) complex forms which resolves the HJ.

Its subcellular location is the cytoplasm. The enzyme catalyses ATP + H2O = ADP + phosphate + H(+). In terms of biological role, the RuvA-RuvB-RuvC complex processes Holliday junction (HJ) DNA during genetic recombination and DNA repair, while the RuvA-RuvB complex plays an important role in the rescue of blocked DNA replication forks via replication fork reversal (RFR). RuvA specifically binds to HJ cruciform DNA, conferring on it an open structure. The RuvB hexamer acts as an ATP-dependent pump, pulling dsDNA into and through the RuvAB complex. RuvB forms 2 homohexamers on either side of HJ DNA bound by 1 or 2 RuvA tetramers; 4 subunits per hexamer contact DNA at a time. Coordinated motions by a converter formed by DNA-disengaged RuvB subunits stimulates ATP hydrolysis and nucleotide exchange. Immobilization of the converter enables RuvB to convert the ATP-contained energy into a lever motion, pulling 2 nucleotides of DNA out of the RuvA tetramer per ATP hydrolyzed, thus driving DNA branch migration. The RuvB motors rotate together with the DNA substrate, which together with the progressing nucleotide cycle form the mechanistic basis for DNA recombination by continuous HJ branch migration. Branch migration allows RuvC to scan DNA until it finds its consensus sequence, where it cleaves and resolves cruciform DNA. In Streptomyces coelicolor (strain ATCC BAA-471 / A3(2) / M145), this protein is Holliday junction branch migration complex subunit RuvB.